A 363-amino-acid polypeptide reads, in one-letter code: Tetraacyldisaccharide 4'-kinase (363 aa).

78–85 (TVGGNGKT) contributes to the ATP binding site.

Belongs to the LpxK family.

The enzyme catalyses a lipid A disaccharide + ATP = a lipid IVA + ADP + H(+). It functions in the pathway glycolipid biosynthesis; lipid IV(A) biosynthesis; lipid IV(A) from (3R)-3-hydroxytetradecanoyl-[acyl-carrier-protein] and UDP-N-acetyl-alpha-D-glucosamine: step 6/6. In terms of biological role, transfers the gamma-phosphate of ATP to the 4'-position of a tetraacyldisaccharide 1-phosphate intermediate (termed DS-1-P) to form tetraacyldisaccharide 1,4'-bis-phosphate (lipid IVA). The polypeptide is Tetraacyldisaccharide 4'-kinase (Wigglesworthia glossinidia brevipalpis).